Consider the following 474-residue polypeptide: MSFTVAIVGRPNVGKSTLFNRLVGKKLALVDDTPGVTRDRRPGEAKLVDLRFHIVDTAGLEEAGADTLEGRMRAQTEIAIDEADLSLFVVDAKMGLTHVDKALADMLRKRGKPVVLVANKSEARGSDGGFYDAFTLGLGEPVPISAEHGQGMIDLRDAIVEAIGVDRAFPEDDDDVAETDIVLRPTVEGEDDEEDLAYDDTKPLRVAIVGRPNAGKSTLINRFLGEDRLLTGPEAGITRDSISVEWDWRGRTIKMFDTAGMRRKARVIEKLEKLSVADTLRAIRFAETVVIVFDATIPFEKQDIQIVDLVLREGRAAVLAFNKWDLVEDPQAVLAELREKTERLLPQARGIRAVPMAGQTGYGLEKLMQSIIDTDMVWNKRISTAKLNRWLDSVQTQHPPPAVSGRRLKLKYMTQVKARPPAFMISCTRPDSVPESYIRYLTNGLRADFNMPGVPIRIHLKASENPFENKRKRR.

2 consecutive EngA-type G domains span residues 3–167 (FTVA…GVDR) and 204–379 (LRVA…MVWN). Residues 9–16 (GRPNVGKS), 56–60 (DTAGL), 119–122 (NKSE), 210–217 (GRPNAGKS), 257–261 (DTAGM), and 322–325 (NKWD) each bind GTP. The 85-residue stretch at 380 to 464 (KRISTAKLNR…PIRIHLKASE (85 aa)) folds into the KH-like domain.

Belongs to the TRAFAC class TrmE-Era-EngA-EngB-Septin-like GTPase superfamily. EngA (Der) GTPase family. As to quaternary structure, associates with the 50S ribosomal subunit.

Its function is as follows. GTPase that plays an essential role in the late steps of ribosome biogenesis. The polypeptide is GTPase Der (Allorhizobium ampelinum (strain ATCC BAA-846 / DSM 112012 / S4) (Agrobacterium vitis (strain S4))).